The following is a 212-amino-acid chain: MSASDRDRVLAAAAVSRETAAALDLYVAQLARWQTVKNLVGPSTLPEVWTRHIADSLQLLDAAPGATRWLDLGSGAGIPGLILAIAGREARPQMQVDLVESNARKGAFLQETARLTGASARIHVSRIESVIGRFTGVEVVCARALAPLPQLLAWTAPLLKSGTIGLFPKGREAQSELTAARETWTFEADVIPSRTDSSAGIVRISSLSGQLP.

Residues glycine 73, 127 to 128, and arginine 143 each bind S-adenosyl-L-methionine; that span reads IE.

This sequence belongs to the methyltransferase superfamily. RNA methyltransferase RsmG family.

The protein resides in the cytoplasm. The catalysed reaction is guanosine(527) in 16S rRNA + S-adenosyl-L-methionine = N(7)-methylguanosine(527) in 16S rRNA + S-adenosyl-L-homocysteine. Its function is as follows. Specifically methylates the N7 position of guanine in position 527 of 16S rRNA. In Methylobacterium nodulans (strain LMG 21967 / CNCM I-2342 / ORS 2060), this protein is Ribosomal RNA small subunit methyltransferase G.